The chain runs to 752 residues: Double zinc ribbon and ankyrin repeat-containing protein 1 (752 aa).

A phosphoserine mark is found at Ser160 and Ser182. The tract at residues 164–187 (IPAYGGGSGSRPPTRQSQSPGFAH) is disordered. Positions 174–183 (RPPTRQSQSP) are enriched in polar residues. DZANK-type zinc fingers lie at residues 211–270 (CAHC…CVVC) and 339–387 (CYRC…GSCG). ANK repeat units follow at residues 605–636 (ENRLLLKEVGPTGEGRVSVIEQLLDEGADPNC) and 640–669 (DNRPVITVAVMNKHHEAIPVLVQRGADIDQ).

In terms of assembly, interacts with NINL isoform 2. Associates with DYNC1H1 and multiple dynein intermediate and light chains as well as actin-binding proteins.

The protein resides in the cytoplasm. Its subcellular location is the cytoskeleton. It localises to the microtubule organizing center. The protein localises to the centrosome. It is found in the cilium basal body. Functionally, involved in vesicle transport in photoreceptor cells. This chain is Double zinc ribbon and ankyrin repeat-containing protein 1, found in Homo sapiens (Human).